The primary structure comprises 498 residues: Glutamate--tRNA ligase (498 aa).

Residues 11 to 21 carry the 'HIGH' region motif; it reads PSPTGHLHIGN. Positions 260–264 match the 'KMSKS' region motif; sequence KLSKR. Lys263 is a binding site for ATP.

This sequence belongs to the class-I aminoacyl-tRNA synthetase family. Glutamate--tRNA ligase type 1 subfamily. Monomer.

It is found in the cytoplasm. The enzyme catalyses tRNA(Glu) + L-glutamate + ATP = L-glutamyl-tRNA(Glu) + AMP + diphosphate. Functionally, catalyzes the attachment of glutamate to tRNA(Glu) in a two-step reaction: glutamate is first activated by ATP to form Glu-AMP and then transferred to the acceptor end of tRNA(Glu). This is Glutamate--tRNA ligase from Leuconostoc mesenteroides subsp. mesenteroides (strain ATCC 8293 / DSM 20343 / BCRC 11652 / CCM 1803 / JCM 6124 / NCDO 523 / NBRC 100496 / NCIMB 8023 / NCTC 12954 / NRRL B-1118 / 37Y).